A 333-amino-acid polypeptide reads, in one-letter code: D-2-hydroxyacid dehydrogenase (NAD+) (333 aa).

Tyr-100 provides a ligand contact to 4-methyl-2-oxopentanoate. NAD(+) is bound by residues His-155, Ile-156, Asp-175, Val-205, Asn-211, Thr-232, Arg-234, and Asp-258. The active site involves Arg-234. Glu-263 is a catalytic residue. Residue His-295 coordinates 4-methyl-2-oxopentanoate. The active-site Proton donor is His-295.

This sequence belongs to the D-isomer specific 2-hydroxyacid dehydrogenase family. As to quaternary structure, homodimer.

The enzyme catalyses a (2R)-2-hydroxycarboxylate + NAD(+) = a 2-oxocarboxylate + NADH + H(+). It carries out the reaction (2R)-hydroxy-4-methylpentanoate + NAD(+) = 4-methyl-2-oxopentanoate + NADH + H(+). It catalyses the reaction (R)-3-phenyllactate + NAD(+) = 3-phenylpyruvate + NADH + H(+). Its activity is regulated as follows. Completely inhibited In the presence of 0.1 mM Hg(2+). No influence on the activity could be detected with Mg(2+) and Ca(2+) and only very weak effects with Cd(2+), Co(2+) and Mn(2+). Reducing agents and thiol group reagents do not affect catalytic activity. Functionally, catalyzes the NADH-dependent reversible reduction of various 2-ketocarboxylic acids to the corresponding D-2-hydroxycarboxylic acids. In vitro can use various substrates, including 4-methyl-2-oxopentanoate (2-oxoisocaproate), 2-oxopentanoate, 2-oxohexanoate and phenylpyruvate. In Lacticaseibacillus paracasei (Lactobacillus paracasei), this protein is D-2-hydroxyacid dehydrogenase (NAD+).